The sequence spans 451 residues: Methionine aminopeptidase 2-2 (451 aa).

The disordered stretch occupies residues methionine 1 to tyrosine 101. Residues glutamate 37–alanine 51 show a composition bias toward acidic residues. A compositionally biased stretch (basic residues) spans lysine 60–alanine 73. Histidine 204 is a substrate binding site. The a divalent metal cation site is built by aspartate 224, aspartate 235, and histidine 304. Histidine 312 contacts substrate. Glutamate 337 and glutamate 432 together coordinate a divalent metal cation.

Belongs to the peptidase M24A family. Methionine aminopeptidase eukaryotic type 2 subfamily. Co(2+) is required as a cofactor. The cofactor is Zn(2+). It depends on Mn(2+) as a cofactor. Requires Fe(2+) as cofactor.

Its subcellular location is the cytoplasm. It catalyses the reaction Release of N-terminal amino acids, preferentially methionine, from peptides and arylamides.. Cotranslationally removes the N-terminal methionine from nascent proteins. The N-terminal methionine is often cleaved when the second residue in the primary sequence is small and uncharged (Met-Ala-, Cys, Gly, Pro, Ser, Thr, or Val). The sequence is that of Methionine aminopeptidase 2-2 from Pyrenophora tritici-repentis (strain Pt-1C-BFP) (Wheat tan spot fungus).